The sequence spans 406 residues: 12S rRNA N(4)-cytidine methyltransferase METTL15 (406 aa).

A mitochondrion-targeting transit peptide spans 1–22 (MLRYPYFYRTYNRLFSHFVDSG). Residues 100–102 (GGH), Asp-119, Phe-146, Asp-169, and Gln-176 each bind S-adenosyl-L-methionine. The residue at position 358 (Ser-358) is a Phosphoserine.

It belongs to the methyltransferase superfamily. RsmH family.

The protein resides in the mitochondrion matrix. The catalysed reaction is cytidine(839) in 12S rRNA + S-adenosyl-L-methionine = N(4)-methylcytidine(839) in 12S rRNA + S-adenosyl-L-homocysteine + H(+). Its function is as follows. N4-methylcytidine (m4C) methyltransferase responsible for the methylation of position C839 in mitochondrial 12S rRNA. Involved in the stabilization of 12S rRNA folding, therefore facilitating the assembly of the mitochondrial small ribosomal subunits. In Mus musculus (Mouse), this protein is 12S rRNA N(4)-cytidine methyltransferase METTL15.